Consider the following 111-residue polypeptide: MKVAAAFLLAVLGGNANPSADNIKDIIGAVGADVDGESIELLLKEVSGKDIAELIASGREKLASVPSGGGVAVSAAPSSGGGGAAAPAEKKEAKKEEKEESDDDMGFSLFE.

The tract at residues 63 to 111 (ASVPSGGGVAVSAAPSSGGGGAAAPAEKKEAKKEEKEESDDDMGFSLFE) is disordered. The span at 88-98 (AEKKEAKKEEK) shows a compositional bias: basic and acidic residues. Phosphoserine is present on Ser-101.

This sequence belongs to the eukaryotic ribosomal protein P1/P2 family. As to quaternary structure, P1 and P2 exist as dimers at the large ribosomal subunit.

Plays an important role in the elongation step of protein synthesis. In Arabidopsis thaliana (Mouse-ear cress), this protein is Large ribosomal subunit protein P2w (RPP2D).